We begin with the raw amino-acid sequence, 100 residues long: Large ribosomal subunit protein uL23 (100 aa).

Belongs to the universal ribosomal protein uL23 family. In terms of assembly, part of the 50S ribosomal subunit. Contacts protein L29, and trigger factor when it is bound to the ribosome.

One of the early assembly proteins it binds 23S rRNA. One of the proteins that surrounds the polypeptide exit tunnel on the outside of the ribosome. Forms the main docking site for trigger factor binding to the ribosome. This Aeromonas salmonicida (strain A449) protein is Large ribosomal subunit protein uL23.